We begin with the raw amino-acid sequence, 211 residues long: Peptidyl-tRNA hydrolase (211 aa).

A tRNA-binding site is contributed by Tyr17. Catalysis depends on His22, which acts as the Proton acceptor. Positions 79, 81, and 127 each coordinate tRNA.

This sequence belongs to the PTH family. As to quaternary structure, monomer.

The protein resides in the cytoplasm. It carries out the reaction an N-acyl-L-alpha-aminoacyl-tRNA + H2O = an N-acyl-L-amino acid + a tRNA + H(+). Functionally, hydrolyzes ribosome-free peptidyl-tRNAs (with 1 or more amino acids incorporated), which drop off the ribosome during protein synthesis, or as a result of ribosome stalling. In terms of biological role, catalyzes the release of premature peptidyl moieties from peptidyl-tRNA molecules trapped in stalled 50S ribosomal subunits, and thus maintains levels of free tRNAs and 50S ribosomes. This Solidesulfovibrio magneticus (strain ATCC 700980 / DSM 13731 / RS-1) (Desulfovibrio magneticus) protein is Peptidyl-tRNA hydrolase.